A 305-amino-acid polypeptide reads, in one-letter code: Coiled-coil domain-containing protein 69-A (305 aa).

A lipid anchor (N-myristoyl glycine) is attached at glycine 2. The disordered stretch occupies residues 13–38 (LRKKKRQKAHQGGLTSQELNDLNAKT). Polar residues predominate over residues 25-38 (GLTSQELNDLNAKT). A coiled-coil region spans residues 42–281 (NEVLQKIKEY…QREKEQNLYR (240 aa)).

This sequence belongs to the CCDC69 family.

Its subcellular location is the cytoplasm. It localises to the cytoskeleton. The protein resides in the spindle. It is found in the midbody. May act as a scaffold to regulate the recruitment and assembly of spindle midzone components. This is Coiled-coil domain-containing protein 69-A (ccdc69-a) from Xenopus laevis (African clawed frog).